A 379-amino-acid polypeptide reads, in one-letter code: (R)-2-hydroxyglutaryl-CoA dehydratase, subunit beta (379 aa).

Belongs to the FldB/FldC dehydratase alpha/beta subunit family. In terms of assembly, the (R)-2-hydroxyglutaryl-CoA dehydratase enzyme system is a heterodimer composed of an alpha subunit (HgdA) and a beta subunit (HgdB). [4Fe-4S] cluster is required as a cofactor. It depends on FMN as a cofactor. The cofactor is Mg(2+).

Its subcellular location is the cytoplasm. The enzyme catalyses (R)-2-hydroxyglutaryl-CoA = (2E)-glutaconyl-CoA + H2O. It participates in amino-acid degradation; L-glutamate degradation via hydroxyglutarate pathway; crotonoyl-CoA from L-glutamate: step 4/5. Activated by the HgdC. Reversibly inactivated by oxidants such as 2-nitrophenol, 3-nitrophenol, 4-nitrophenol, 4-nitrobenzoate, carbonyl cyanide 4-(trifluoromethoxy)phenylhydrazone (FCCP) and chloramphenicol. Irreversibly inactivated by oxidants such as hydroxylamine and nitrite. Its function is as follows. Involved in the fermentation of L-glutamate via the hydroxyglutarate pathway. Catalyzes the reversible syn-elimination of water from (R)-2-hydroxyglutaryl-CoA to yield (E)-glutaconyl-CoA. The dehydration mechanism involves a transient one electron reduction of the thioester from (R)-2-hydroxyglutaryl-CoA, generating a ketyl radical. Prior to (E)-glutaconyl-CoA formation, the ketyl radical is subsequently reoxidized by electron transfer back to the HgdA-HgdB complex (CompD) to avoid change in oxidation state of the substrate. The appropriate redox state of dehydratase HgdA-HgdB complex (CompD) is maintained by HgdC (CompA) via hydrolysis of ATP and ATP-dependent electron transfer. Since the electron is recycled, the dehydratase is able to perform several turnovers with only catalytic amounts of ATP and substoichiometric amounts of HgdC (CompA). This is (R)-2-hydroxyglutaryl-CoA dehydratase, subunit beta from Acidaminococcus fermentans (strain ATCC 25085 / DSM 20731 / CCUG 9996 / CIP 106432 / VR4).